The chain runs to 434 residues: Transcription factor AP-2-epsilon (434 aa).

The segment at 30–123 (LNQGPYSSAP…GLSLDPRRDY (94 aa)) is disordered. Over residues 52 to 62 (PYFPPPYPQPP) the composition is skewed to pro residues. Residues 53–58 (YFPPPY) carry the PPxY motif motif. Residues 81–97 (SSINSIHHQHQQPSWHT) show a composition bias toward polar residues. Residues 278–408 (RRKAANVTLL…YLLESLKGMD (131 aa)) are H-S-H (helix-span-helix), dimerization. A disordered region spans residues 415–434 (TGNGHSAAESKSEKDIKHRK). The span at 422–434 (AESKSEKDIKHRK) shows a compositional bias: basic and acidic residues.

The protein belongs to the AP-2 family. In terms of assembly, binds DNA as a dimer. Can form homodimers or heterodimers with other AP-2 family members.

Its subcellular location is the nucleus. Its function is as follows. Sequence-specific DNA-binding protein that interacts with inducible viral and cellular enhancer elements to regulate transcription of selected genes. AP-2 factors bind to the consensus sequence 5'-GCCNNNGGC-3' and activate genes involved in a large spectrum of important biological functions. The chain is Transcription factor AP-2-epsilon from Xenopus laevis (African clawed frog).